The primary structure comprises 153 residues: Large ribosomal subunit protein uL30 (153 aa).

It belongs to the universal ribosomal protein uL30 family. As to quaternary structure, part of the 50S ribosomal subunit.

This chain is Large ribosomal subunit protein uL30, found in Methanospirillum hungatei JF-1 (strain ATCC 27890 / DSM 864 / NBRC 100397 / JF-1).